Here is a 76-residue protein sequence, read N- to C-terminus: Zinc finger protein 706 (76 aa).

Positions 1-13 (MARGQQKIQSQQK) are enriched in low complexity. 2 disordered regions span residues 1 to 32 (MARGQQKIQSQQKNAKKQAEQKKKQGHDQKAA) and 53 to 76 (TFKQHFESKHPKTPLPPELADVQA). Basic and acidic residues-rich tracts occupy residues 17 to 31 (KQAEQKKKQGHDQKA) and 53 to 62 (TFKQHFESKH). Residues 39–62 (YTCTVCRTQMPDPKTFKQHFESKH) form a C2H2-type zinc finger.

The protein resides in the cytoplasm. Its subcellular location is the nucleus. In terms of biological role, transcription repressor involved in the exit of embryonic stem cells (ESCs) from self-renewal. The protein is Zinc finger protein 706 of Gallus gallus (Chicken).